The following is a 743-amino-acid chain: Phosphoribosylformylglycinamidine synthase subunit PurL (743 aa).

The active site involves histidine 50. Tyrosine 53 and lysine 92 together coordinate ATP. Glutamate 94 is a Mg(2+) binding site. Substrate-binding positions include serine 95–histidine 98 and arginine 117. Catalysis depends on histidine 96, which acts as the Proton acceptor. Residue aspartate 118 participates in Mg(2+) binding. Glutamine 241 contributes to the substrate binding site. A Mg(2+)-binding site is contributed by aspartate 269. A substrate-binding site is contributed by glutamate 313–glutamine 315. ATP contacts are provided by aspartate 495 and glycine 532. A Mg(2+)-binding site is contributed by asparagine 533. Serine 535 provides a ligand contact to substrate.

It belongs to the FGAMS family. As to quaternary structure, monomer. Part of the FGAM synthase complex composed of 1 PurL, 1 PurQ and 2 PurS subunits.

Its subcellular location is the cytoplasm. It catalyses the reaction N(2)-formyl-N(1)-(5-phospho-beta-D-ribosyl)glycinamide + L-glutamine + ATP + H2O = 2-formamido-N(1)-(5-O-phospho-beta-D-ribosyl)acetamidine + L-glutamate + ADP + phosphate + H(+). The protein operates within purine metabolism; IMP biosynthesis via de novo pathway; 5-amino-1-(5-phospho-D-ribosyl)imidazole from N(2)-formyl-N(1)-(5-phospho-D-ribosyl)glycinamide: step 1/2. Part of the phosphoribosylformylglycinamidine synthase complex involved in the purines biosynthetic pathway. Catalyzes the ATP-dependent conversion of formylglycinamide ribonucleotide (FGAR) and glutamine to yield formylglycinamidine ribonucleotide (FGAM) and glutamate. The FGAM synthase complex is composed of three subunits. PurQ produces an ammonia molecule by converting glutamine to glutamate. PurL transfers the ammonia molecule to FGAR to form FGAM in an ATP-dependent manner. PurS interacts with PurQ and PurL and is thought to assist in the transfer of the ammonia molecule from PurQ to PurL. The chain is Phosphoribosylformylglycinamidine synthase subunit PurL from Rhizobium etli (strain ATCC 51251 / DSM 11541 / JCM 21823 / NBRC 15573 / CFN 42).